A 132-amino-acid chain; its full sequence is Small ribosomal subunit protein uS8 (132 aa).

This sequence belongs to the universal ribosomal protein uS8 family. As to quaternary structure, part of the 30S ribosomal subunit. Contacts proteins S5 and S12.

One of the primary rRNA binding proteins, it binds directly to 16S rRNA central domain where it helps coordinate assembly of the platform of the 30S subunit. This is Small ribosomal subunit protein uS8 from Mesorhizobium japonicum (strain LMG 29417 / CECT 9101 / MAFF 303099) (Mesorhizobium loti (strain MAFF 303099)).